A 362-amino-acid chain; its full sequence is Chorismate synthase (362 aa).

2 residues coordinate NADP(+): arginine 47 and arginine 53. FMN is bound by residues 124-126 (RSS), glycine 285, 300-304 (KPTAT), and arginine 326.

Belongs to the chorismate synthase family. As to quaternary structure, homotetramer. The cofactor is FMNH2.

It catalyses the reaction 5-O-(1-carboxyvinyl)-3-phosphoshikimate = chorismate + phosphate. The protein operates within metabolic intermediate biosynthesis; chorismate biosynthesis; chorismate from D-erythrose 4-phosphate and phosphoenolpyruvate: step 7/7. Its function is as follows. Catalyzes the anti-1,4-elimination of the C-3 phosphate and the C-6 proR hydrogen from 5-enolpyruvylshikimate-3-phosphate (EPSP) to yield chorismate, which is the branch point compound that serves as the starting substrate for the three terminal pathways of aromatic amino acid biosynthesis. This reaction introduces a second double bond into the aromatic ring system. In Cyanothece sp. (strain PCC 7425 / ATCC 29141), this protein is Chorismate synthase.